We begin with the raw amino-acid sequence, 437 residues long: Protein WVD2-like 5 (437 aa).

Disordered stretches follow at residues 1-22 (MDPE…GGLA), 38-210 (TVDT…FSFK), and 254-437 (LRKS…AVEH). Residues 41 to 55 (TTSESQNENSANSST) show a composition bias toward low complexity. Residues 58-86 (TIEHVKEAAEGTQVEHVDDSKCMKGEKAQ) show a composition bias toward basic and acidic residues. The segment covering 121–140 (SNGSVAPNVQTTNPLKSKSF) has biased composition (polar residues). Over residues 151–167 (GKHDSAPAESADGEKVK) the composition is skewed to basic and acidic residues. Serine 208 bears the Phosphoserine mark. Over residues 288 to 297 (KSPKLGRKKT) the composition is skewed to basic residues. The segment covering 360-371 (PAPAKAAIIPAK) has biased composition (low complexity). Positions 408–437 (EDSHETVSPRMNEDRADKSIEVSEAVAVEH) are enriched in basic and acidic residues. Serine 415 is subject to Phosphoserine.

This sequence belongs to the TPX2 family. As to expression, expressed in seedlings.

It localises to the cytoplasm. The protein localises to the cytoskeleton. In terms of biological role, microtubule-associated protein (MAP) that regulates the orientation of interphase cortical microtubules. This chain is Protein WVD2-like 5, found in Arabidopsis thaliana (Mouse-ear cress).